The sequence spans 222 residues: ATP-dependent dethiobiotin synthetase BioD (222 aa).

ATP is bound at residue 12–17; it reads DVGKTI. Thr16 contacts Mg(2+). Lys37 is an active-site residue. Thr41 contributes to the substrate binding site. Residues Asp49, 107–110, 167–168, and 197–199 each bind ATP; these read EGAG, GS, and AEG. Asp49 and Glu107 together coordinate Mg(2+).

Belongs to the dethiobiotin synthetase family. As to quaternary structure, homodimer. The cofactor is Mg(2+).

The protein localises to the cytoplasm. The enzyme catalyses (7R,8S)-7,8-diammoniononanoate + CO2 + ATP = (4R,5S)-dethiobiotin + ADP + phosphate + 3 H(+). It functions in the pathway cofactor biosynthesis; biotin biosynthesis; biotin from 7,8-diaminononanoate: step 1/2. Functionally, catalyzes a mechanistically unusual reaction, the ATP-dependent insertion of CO2 between the N7 and N8 nitrogen atoms of 7,8-diaminopelargonic acid (DAPA, also called 7,8-diammoniononanoate) to form a ureido ring. This chain is ATP-dependent dethiobiotin synthetase BioD, found in Corynebacterium diphtheriae (strain ATCC 700971 / NCTC 13129 / Biotype gravis).